A 215-amino-acid chain; its full sequence is Pyrrolidone-carboxylate peptidase (215 aa).

Catalysis depends on residues glutamate 80, cysteine 143, and histidine 167.

The protein belongs to the peptidase C15 family. Homotetramer.

It localises to the cytoplasm. The enzyme catalyses Release of an N-terminal pyroglutamyl group from a polypeptide, the second amino acid generally not being Pro.. In terms of biological role, removes 5-oxoproline from various penultimate amino acid residues except L-proline. This is Pyrrolidone-carboxylate peptidase from Bacillus cereus (strain Q1).